Consider the following 125-residue polypeptide: Holo-[acyl-carrier-protein] synthase (125 aa).

Mg(2+) contacts are provided by aspartate 8 and glutamate 55.

The protein belongs to the P-Pant transferase superfamily. AcpS family. Requires Mg(2+) as cofactor.

The protein resides in the cytoplasm. It catalyses the reaction apo-[ACP] + CoA = holo-[ACP] + adenosine 3',5'-bisphosphate + H(+). Transfers the 4'-phosphopantetheine moiety from coenzyme A to a Ser of acyl-carrier-protein. The protein is Holo-[acyl-carrier-protein] synthase of Treponema pallidum (strain Nichols).